We begin with the raw amino-acid sequence, 389 residues long: Cellobiose 2-epimerase (389 aa).

It belongs to the cellobiose 2-epimerase family.

It catalyses the reaction D-cellobiose = beta-D-glucosyl-(1-&gt;4)-D-mannopyranose. Functionally, catalyzes the reversible epimerization of cellobiose to 4-O-beta-D-glucopyranosyl-D-mannose (Glc-Man). The chain is Cellobiose 2-epimerase from Ruminococcus albus (strain ATCC 27210 / DSM 20455 / JCM 14654 / NCDO 2250 / 7).